The following is a 220-amino-acid chain: Large ribosomal subunit protein uL16 (220 aa).

The protein belongs to the universal ribosomal protein uL16 family. As to quaternary structure, component of the small ribosomal subunit. Mature ribosomes consist of a small (40S) and a large (60S) subunit. The 40S subunit contains about 33 different proteins and 1 molecule of RNA (18S). The 60S subunit contains about 49 different proteins and 3 molecules of RNA (25S, 5.8S and 5S).

This is Large ribosomal subunit protein uL16 (RPL10) from Vitis riparia (Frost grape).